Here is a 114-residue protein sequence, read N- to C-terminus: Non-specific lipid-transfer protein 1 (114 aa).

A signal peptide spans 1–25 (MIKGLAITVVAVLAVVQLLARPSDA). Disulfide bonds link Cys29–Cys76, Cys39–Cys53, Cys54–Cys99, and Cys74–Cys113.

The protein belongs to the plant LTP family. As to expression, expressed in seeds and, at very low levels, in pulp of fruit (at protein level).

In terms of biological role, plant non-specific lipid-transfer proteins transfer phospholipids as well as galactolipids across membranes. May play a role in wax or cutin deposition in the cell walls of expanding epidermal cells and certain secretory tissues. This is Non-specific lipid-transfer protein 1 from Actinidia chinensis var. chinensis (Chinese soft-hair kiwi).